Here is a 799-residue protein sequence, read N- to C-terminus: Elongation factor G, mitochondrial (799 aa).

Residues 1–33 (MRSPSLARLQTRAVFGLTRSARFQPQTLLRQRC) constitute a mitochondrion transit peptide. The 288-residue stretch at 97-384 (DKCRNIGIAA…GVIDYLPNPA (288 aa)) folds into the tr-type G domain. GTP is bound by residues 106–113 (AHIDSGKT), 182–186 (DTPGH), and 236–239 (NKMD).

The protein belongs to the TRAFAC class translation factor GTPase superfamily. Classic translation factor GTPase family. EF-G/EF-2 subfamily.

The protein resides in the mitochondrion. It participates in protein biosynthesis; polypeptide chain elongation. Its function is as follows. Mitochondrial GTPase that catalyzes the GTP-dependent ribosomal translocation step during translation elongation. During this step, the ribosome changes from the pre-translocational (PRE) to the post-translocational (POST) state as the newly formed A-site-bound peptidyl-tRNA and P-site-bound deacylated tRNA move to the P and E sites, respectively. Catalyzes the coordinated movement of the two tRNA molecules, the mRNA and conformational changes in the ribosome. This chain is Elongation factor G, mitochondrial (mef1), found in Penicillium rubens (strain ATCC 28089 / DSM 1075 / NRRL 1951 / Wisconsin 54-1255) (Penicillium chrysogenum).